Here is a 159-residue protein sequence, read N- to C-terminus: uncharacterized protein (159 aa).

Helical transmembrane passes span 17–37 (ALFI…TILV) and 40–60 (LLQF…FKKY).

It localises to the cell membrane. This is an uncharacterized protein from Borreliella burgdorferi (strain ATCC 35210 / DSM 4680 / CIP 102532 / B31) (Borrelia burgdorferi).